Reading from the N-terminus, the 150-residue chain is Arginine repressor (150 aa).

The protein belongs to the ArgR family.

It is found in the cytoplasm. The protein operates within amino-acid biosynthesis; L-arginine biosynthesis [regulation]. Regulates arginine biosynthesis genes. This is Arginine repressor from Clostridium botulinum (strain Eklund 17B / Type B).